The chain runs to 492 residues: MMNNLSHLESDYSEYVEVDPTGRYGRYNEVLGKGSSKTVYRGFDEYQGIEVAWNQVKLYDFLQSPQELERLYCEIHLLKTLKHKSIMKFYASWVDTDNRNINFVTEMFTSGTLRQYRLKHKRVNIRAVKNWCRQILRGLNYLHTHDPPVIHRDLKCDNIFINGNQGEVKIGDLGLAACLQHSHAAHCVGTPEFMAPEVYKEEYNQLVDIYSFGMCVLEMVTFDYPYSECSHPAQIYKRVISGKKPDGLDKVKDPEVRGFIEKCLATVSLRLSACELLDDHFLCIDESDMRRVESEKGLIDEAGTPLRHSYHIPHYSNGYYSLYNQNQWDYNGDETVESHEIDLLEFQNDDDEEEEDKRFGSVDISIKGKRRDNGDGLFLRLKTVNKEGCVRNIYFPFDIETDTAISVAREMVEELEMDDRDVTKIANMIDGEIASLVPNWSIFCSSESNRSSVGSVMDFNEMQCGRDGCEEKHGRFEEITFEITVNDSDEED.

The region spanning 25–282 (GRYNEVLGKG…ACELLDDHFL (258 aa)) is the Protein kinase domain. Residues 105–108 (TEMF) and K155 each bind ATP. The Proton acceptor role is filled by D172.

This sequence belongs to the protein kinase superfamily. Ser/Thr protein kinase family. WNK subfamily.

The enzyme catalyses L-seryl-[protein] + ATP = O-phospho-L-seryl-[protein] + ADP + H(+). The catalysed reaction is L-threonyl-[protein] + ATP = O-phospho-L-threonyl-[protein] + ADP + H(+). Its function is as follows. May regulate flowering time by modulating the photoperiod pathway. This chain is Probable serine/threonine-protein kinase WNK9 (WNK9), found in Arabidopsis thaliana (Mouse-ear cress).